The primary structure comprises 302 residues: Acetylesterase (302 aa).

An N-terminal signal peptide occupies residues 1–21 (MGRFLTTTALALLATGGAATA). 2 N-linked (GlcNAc...) asparagine glycosylation sites follow: Asn84 and Asn101.

It belongs to the carbohydrate esterase CE16 family.

It localises to the secreted. It carries out the reaction an acetyl ester + H2O = an aliphatic alcohol + acetate + H(+). Its function is as follows. Acetyl esterase that acts as an exo-deacetylase. Liberates acetic acid from xylo-oligomers. The sequence is that of Acetylesterase from Thermothelomyces thermophilus (Myceliophthora thermophila).